Consider the following 242-residue polypeptide: Probable transcriptional regulatory protein Bphy_2064 (242 aa).

This sequence belongs to the TACO1 family.

Its subcellular location is the cytoplasm. The sequence is that of Probable transcriptional regulatory protein Bphy_2064 from Paraburkholderia phymatum (strain DSM 17167 / CIP 108236 / LMG 21445 / STM815) (Burkholderia phymatum).